Reading from the N-terminus, the 147-residue chain is uncharacterized protein (147 aa).

Belongs to the RTX toxin acyltransferase family.

This is an uncharacterized protein from Synechocystis sp. (strain ATCC 27184 / PCC 6803 / Kazusa).